A 436-amino-acid polypeptide reads, in one-letter code: Serine carboxypeptidase-like 15 (436 aa).

Residues 1 to 24 (MASWIFKLLLLLQCVLVLIQHADS) form the signal peptide. Intrachain disulfides connect cysteine 83-cysteine 326, cysteine 247-cysteine 261, and cysteine 285-cysteine 292. Asparagine 104 carries an N-linked (GlcNAc...) asparagine glycan. Serine 179 is an active-site residue. N-linked (GlcNAc...) asparagine glycans are attached at residues asparagine 306 and asparagine 345. Aspartate 361 is an active-site residue. Asparagine 377 carries an N-linked (GlcNAc...) asparagine glycan. Histidine 414 is an active-site residue.

Belongs to the peptidase S10 family. In terms of tissue distribution, expressed in seedlings and roots.

Its subcellular location is the secreted. In terms of biological role, probable carboxypeptidase. This is Serine carboxypeptidase-like 15 (SCPL15) from Arabidopsis thaliana (Mouse-ear cress).